We begin with the raw amino-acid sequence, 421 residues long: ATP-dependent RNA helicase RhlB (421 aa).

A Q motif motif is present at residues 9–37; it reads QKFSDFALHPQVVEALEKKGFYNCTPIQA. Positions 40 to 219 constitute a Helicase ATP-binding domain; sequence LPLTLAGRDV…FEQMNNAEYV (180 aa). Residue 53–60 participates in ATP binding; sequence AQTGTGKT. Positions 165–168 match the DEAD box motif; it reads DEAD. The 146-residue stretch at 245-390 folds into the Helicase C-terminal domain; that stretch reads RLLQTLIEEE…VSKYNPEALM (146 aa). Residues 396–421 are disordered; the sequence is PLRLTRSRPGNGPRRAGAPRNRRRSG. Residues 402–414 are compositionally biased toward low complexity; the sequence is SRPGNGPRRAGAP.

It belongs to the DEAD box helicase family. RhlB subfamily. Component of the RNA degradosome, which is a multiprotein complex involved in RNA processing and mRNA degradation.

Its subcellular location is the cytoplasm. It carries out the reaction ATP + H2O = ADP + phosphate + H(+). Functionally, DEAD-box RNA helicase involved in RNA degradation. Has RNA-dependent ATPase activity and unwinds double-stranded RNA. The protein is ATP-dependent RNA helicase RhlB of Salmonella paratyphi A (strain AKU_12601).